Consider the following 192-residue polypeptide: Small ribosomal subunit protein uS5 (192 aa).

The S5 DRBM domain maps to 22-85 (LVDKLVTINR…DRAKRAMIRV (64 aa)).

Belongs to the universal ribosomal protein uS5 family. In terms of assembly, part of the 30S ribosomal subunit. Contacts proteins S4 and S8.

With S4 and S12 plays an important role in translational accuracy. Functionally, located at the back of the 30S subunit body where it stabilizes the conformation of the head with respect to the body. This is Small ribosomal subunit protein uS5 from Gluconacetobacter diazotrophicus (strain ATCC 49037 / DSM 5601 / CCUG 37298 / CIP 103539 / LMG 7603 / PAl5).